A 163-amino-acid polypeptide reads, in one-letter code: Protein-export protein SecB (163 aa).

It belongs to the SecB family. As to quaternary structure, homotetramer, a dimer of dimers. One homotetramer interacts with 1 SecA dimer.

Its subcellular location is the cytoplasm. Its function is as follows. One of the proteins required for the normal export of preproteins out of the cell cytoplasm. It is a molecular chaperone that binds to a subset of precursor proteins, maintaining them in a translocation-competent state. It also specifically binds to its receptor SecA. This Burkholderia ambifaria (strain MC40-6) protein is Protein-export protein SecB.